A 545-amino-acid polypeptide reads, in one-letter code: Sulfite oxidase, mitochondrial (545 aa).

Residues 1–79 (MLLLHRAVVL…YQDHRCRAAQ (79 aa)) constitute a mitochondrion transit peptide. The 80-residue stretch at 82–161 (TRIYTKEEVS…LAQYKVGELN (80 aa)) folds into the Cytochrome b5 heme-binding domain. Position 118 (His118) interacts with heme b. A Phosphoserine modification is found at Ser123. 3 residues coordinate heme b: His143, Gln145, and His147. The interval 165–174 (KVAPTVETSD) is hinge. The segment at 175–401 (PYADDPVRHP…YSHWQRRDYK (227 aa)) is moco domain. Mo-molybdopterin-binding positions include 215 to 219 (FTRNH), Cys264, Asp322, His361, Arg366, and 377 to 379 (HVK). A homodimerization region spans residues 402–538 (GFSPSVDWDT…RGVLSNAWHR (137 aa)).

As to quaternary structure, homodimer. It depends on heme b as a cofactor. Mo-molybdopterin serves as cofactor.

The protein localises to the mitochondrion intermembrane space. It catalyses the reaction sulfite + O2 + H2O = sulfate + H2O2. The protein operates within energy metabolism; sulfur metabolism. In terms of biological role, catalyzes the oxidation of sulfite to sulfate, the terminal reaction in the oxidative degradation of sulfur-containing amino acids. This is Sulfite oxidase, mitochondrial (SUOX) from Macaca fascicularis (Crab-eating macaque).